Here is a 158-residue protein sequence, read N- to C-terminus: Cyclic pyranopterin monophosphate synthase (158 aa).

Residues 76 to 78 (LCH) and 114 to 115 (ME) each bind substrate. Asp129 is an active-site residue.

Belongs to the MoaC family. In terms of assembly, homohexamer; trimer of dimers.

The catalysed reaction is (8S)-3',8-cyclo-7,8-dihydroguanosine 5'-triphosphate = cyclic pyranopterin phosphate + diphosphate. The protein operates within cofactor biosynthesis; molybdopterin biosynthesis. In terms of biological role, catalyzes the conversion of (8S)-3',8-cyclo-7,8-dihydroguanosine 5'-triphosphate to cyclic pyranopterin monophosphate (cPMP). This Shewanella sediminis (strain HAW-EB3) protein is Cyclic pyranopterin monophosphate synthase.